A 78-amino-acid chain; its full sequence is Small ribosomal subunit protein uS17 (78 aa).

It belongs to the universal ribosomal protein uS17 family. As to quaternary structure, part of the 30S ribosomal subunit.

Functionally, one of the primary rRNA binding proteins, it binds specifically to the 5'-end of 16S ribosomal RNA. This is Small ribosomal subunit protein uS17 from Agrobacterium fabrum (strain C58 / ATCC 33970) (Agrobacterium tumefaciens (strain C58)).